A 361-amino-acid polypeptide reads, in one-letter code: MAPTLLTTQFSNPAEVTDFVVYKGNGVKGLSETGIKALPEQYIQPLEERLINKFVNETDEAIPVIDMSNPDEDRVAEAVCDAAEKWGFFQVINHGVPLEVLDDVKAATHKFFNLPVEEKRKFTKENSLSTTVRFGTSFSPLAEQALEWKDYLSLFFVSEAEAEQFWPDICRNETLEYINKSKKMVRRLLEYLGKNLNVKELDETKESLFMGSIRVNLNYYPICPNPDLTVGVGRHSDVSSLTILLQDQIGGLHVRSLASGNWVHVPPVAGSFVINIGDAMQIMSNGLYKSVEHRVLANGYNNRISVPIFVNPKPESVIGPLPEVIANGEEPIYRDVLYSDYVKYFFRKAHDGKKTVDYAKI.

The 109-residue stretch at 204–312 (TKESLFMGSI…RISVPIFVNP (109 aa)) folds into the Fe2OG dioxygenase domain. Tyr-220 contributes to the 2-oxoglutarate binding site. Residues His-235, Asp-237, and His-293 each contribute to the Fe cation site. 2 residues coordinate 2-oxoglutarate: Arg-303 and Ser-305.

It belongs to the iron/ascorbate-dependent oxidoreductase family. The cofactor is L-ascorbate. It depends on Fe(2+) as a cofactor. As to expression, highly expressed in roots, especially in the cortex.

The catalysed reaction is (E)-feruloyl-CoA + 2-oxoglutarate + O2 = (E)-6-hydroxyferuloyl-CoA + succinate + CO2. It catalyses the reaction (E)-6-hydroxyferuloyl-CoA = scopoletin + CoA. It participates in phenylpropanoid metabolism. 2-oxoglutarate (OG)- and Fe(II)-dependent dioxygenase (2OGD) involved in scopoletin biosynthesis. Converts feruloyl CoA into 6'-hydroxyferuloyl CoA but has no activity with ferulic acid, feruloylquinic acid, caffeic acid, caffeoyl CoA, p-coumaric acid, cinnamic acid, cinnamoyl CoA or benzoyl CoA. Required for the production and secretion of compounds (e.g. fluorescent coumarins) that facilitate the mobilization and uptake of iron from sources with low bioavailability or in high pH-induced iron deficiency conditions. Involved in the pathway of sideretin biosynthesis from feruloyl CoA, a redox-active catecholic metabolite exuded by roots in response to iron deficiency in order to facilitate the uptake of iron; this pathway consists in the successive conversion from feruloyl CoA to scopoletin, from scopoletin to fraxetin and from fraxetin to sideretin. Catalyzes the biosynthesis of scopoletin from feruloyl CoA. This is Feruloyl CoA ortho-hydroxylase 1 from Arabidopsis thaliana (Mouse-ear cress).